The chain runs to 127 residues: UPF0325 protein VV1_1856 (127 aa).

The protein belongs to the UPF0325 family.

This is UPF0325 protein VV1_1856 from Vibrio vulnificus (strain CMCP6).